The chain runs to 158 residues: Ribosome maturation factor RimP (158 aa).

Belongs to the RimP family.

The protein localises to the cytoplasm. Its function is as follows. Required for maturation of 30S ribosomal subunits. This chain is Ribosome maturation factor RimP, found in Aquifex aeolicus (strain VF5).